A 205-amino-acid polypeptide reads, in one-letter code: uncharacterized protein (205 aa).

Residues 10 to 75 are a coiled coil; that stretch reads QDLLSAVDQQ…AANLMTVMTD (66 aa). Residues 108-141 are disordered; the sequence is MPLPSSNTNNDQTSPPASGKTSETPKKNPTNAMF. A compositionally biased stretch (polar residues) spans 111–141; it reads PSSNTNNDQTSPPASGKTSETPKKNPTNAMF.

It belongs to the asfivirus K205R family.

The protein resides in the host cytoplasm. Its function is as follows. Induces host endoplasmic reticulum stress and consequently activates autophagy and NF-kappa-B signaling pathway. In turn, may induce autophagy-mediated STING1 degradation and innate immune evasion. This is an uncharacterized protein from Ornithodoros (relapsing fever ticks).